A 120-amino-acid chain; its full sequence is Large ribosomal subunit protein bL19 (120 aa).

The protein belongs to the bacterial ribosomal protein bL19 family.

Its function is as follows. This protein is located at the 30S-50S ribosomal subunit interface and may play a role in the structure and function of the aminoacyl-tRNA binding site. The protein is Large ribosomal subunit protein bL19 of Renibacterium salmoninarum (strain ATCC 33209 / DSM 20767 / JCM 11484 / NBRC 15589 / NCIMB 2235).